Consider the following 307-residue polypeptide: tRNA pseudouridine synthase B (307 aa).

Asp38 acts as the Nucleophile in catalysis.

Belongs to the pseudouridine synthase TruB family. Type 1 subfamily.

It carries out the reaction uridine(55) in tRNA = pseudouridine(55) in tRNA. In terms of biological role, responsible for synthesis of pseudouridine from uracil-55 in the psi GC loop of transfer RNAs. This is tRNA pseudouridine synthase B from Bacillus cereus (strain ZK / E33L).